The following is a 3120-amino-acid chain: DNA-directed RNA polymerase subunit beta'' (3120 aa).

4 residues coordinate Zn(2+): cysteine 323, cysteine 396, cysteine 403, and cysteine 406. The tract at residues 595–1130 (FIGEGKQNVL…LKTLVLKKWF (536 aa)) is insert-1. The interval 1796–2346 (KGHLVAYARP…NGIIQAKSLL (551 aa)) is insert-2. Positions 2422–2610 (NSNFLENTHF…PEGEGEKDMT (189 aa)) are insert-3. An insert-4 region spans residues 2726-2801 (FSKKRWKKSI…KQNQTIILAL (76 aa)). Positions 2856–2996 (ASKMSEYMFS…LNQLLSNNLD (141 aa)) are insert-5. The interval 2926 to 2956 (EGIDSSKIPSSNIPEGKVTQNNKRKSTRKNV) is disordered. A compositionally biased stretch (polar residues) spans 2932-2946 (KIPSSNIPEGKVTQN).

The protein belongs to the RNA polymerase beta' chain family. RpoC2 subfamily. In terms of assembly, in plastids the minimal PEP RNA polymerase catalytic core is composed of four subunits: alpha, beta, beta', and beta''. When a (nuclear-encoded) sigma factor is associated with the core the holoenzyme is formed, which can initiate transcription. Zn(2+) serves as cofactor.

The protein localises to the plastid. Its subcellular location is the chloroplast. The enzyme catalyses RNA(n) + a ribonucleoside 5'-triphosphate = RNA(n+1) + diphosphate. DNA-dependent RNA polymerase catalyzes the transcription of DNA into RNA using the four ribonucleoside triphosphates as substrates. This chain is DNA-directed RNA polymerase subunit beta'', found in Chlamydomonas reinhardtii (Chlamydomonas smithii).